The following is a 137-amino-acid chain: Phosphoribosyl-AMP cyclohydrolase (137 aa).

Asp-84 serves as a coordination point for Mg(2+). Residue Cys-85 participates in Zn(2+) binding. Residues Asp-86 and Asp-88 each contribute to the Mg(2+) site. Residues Cys-101 and Cys-108 each coordinate Zn(2+).

The protein belongs to the PRA-CH family. As to quaternary structure, homodimer. Requires Mg(2+) as cofactor. Zn(2+) is required as a cofactor.

Its subcellular location is the cytoplasm. The enzyme catalyses 1-(5-phospho-beta-D-ribosyl)-5'-AMP + H2O = 1-(5-phospho-beta-D-ribosyl)-5-[(5-phospho-beta-D-ribosylamino)methylideneamino]imidazole-4-carboxamide. The protein operates within amino-acid biosynthesis; L-histidine biosynthesis; L-histidine from 5-phospho-alpha-D-ribose 1-diphosphate: step 3/9. Catalyzes the hydrolysis of the adenine ring of phosphoribosyl-AMP. This is Phosphoribosyl-AMP cyclohydrolase from Prosthecochloris aestuarii (strain DSM 271 / SK 413).